Here is a 589-residue protein sequence, read N- to C-terminus: Acyl-CoA ligase SID4 (589 aa).

The PTS2-type peroxisomal targeting signal motif lies at 12 to 20 (RLQQTLNHI). Residues 228–236 (TSGSTGNPK), 367–372 (SSYGLT), Asp458, and Arg473 each bind ATP. Thr372 contacts substrate. CoA contacts are provided by residues 481 to 483 (GGE), Lys547, and 555 to 557 (FGL). Lys572 lines the ATP pocket.

This sequence belongs to the ATP-dependent AMP-binding enzyme family.

The protein resides in the peroxisome. Its pathway is siderophore biosynthesis. Its function is as follows. Acyl-CoA ligase; part of the gene cluster that mediates the biosynthesis of hydroxamate-containing siderophores that play a critical role in virulence via intracellular iron acquisition during macrophage infection. This chain is Acyl-CoA ligase SID4, found in Ajellomyces capsulatus (Darling's disease fungus).